We begin with the raw amino-acid sequence, 360 residues long: UDP-N-acetylglucosamine--N-acetylmuramyl-(pentapeptide) pyrophosphoryl-undecaprenol N-acetylglucosamine transferase (360 aa).

Residues 13 to 15, asparagine 125, arginine 164, serine 191, and glutamine 290 contribute to the UDP-N-acetyl-alpha-D-glucosamine site; that span reads TGG.

The protein belongs to the glycosyltransferase 28 family. MurG subfamily.

The protein resides in the cell inner membrane. It carries out the reaction di-trans,octa-cis-undecaprenyl diphospho-N-acetyl-alpha-D-muramoyl-L-alanyl-D-glutamyl-meso-2,6-diaminopimeloyl-D-alanyl-D-alanine + UDP-N-acetyl-alpha-D-glucosamine = di-trans,octa-cis-undecaprenyl diphospho-[N-acetyl-alpha-D-glucosaminyl-(1-&gt;4)]-N-acetyl-alpha-D-muramoyl-L-alanyl-D-glutamyl-meso-2,6-diaminopimeloyl-D-alanyl-D-alanine + UDP + H(+). It functions in the pathway cell wall biogenesis; peptidoglycan biosynthesis. Its function is as follows. Cell wall formation. Catalyzes the transfer of a GlcNAc subunit on undecaprenyl-pyrophosphoryl-MurNAc-pentapeptide (lipid intermediate I) to form undecaprenyl-pyrophosphoryl-MurNAc-(pentapeptide)GlcNAc (lipid intermediate II). This Hahella chejuensis (strain KCTC 2396) protein is UDP-N-acetylglucosamine--N-acetylmuramyl-(pentapeptide) pyrophosphoryl-undecaprenol N-acetylglucosamine transferase.